The sequence spans 631 residues: Phosphomethylpyrimidine synthase (631 aa).

Residues Asn239, Met268, Tyr297, His333, 353–355 (SRG), 394–397 (DGLR), and Glu433 each bind substrate. Position 437 (His437) interacts with Zn(2+). Tyr460 is a substrate binding site. His501 is a Zn(2+) binding site. Positions 581, 584, and 589 each coordinate [4Fe-4S] cluster.

This sequence belongs to the ThiC family. In terms of assembly, homodimer. [4Fe-4S] cluster is required as a cofactor.

The catalysed reaction is 5-amino-1-(5-phospho-beta-D-ribosyl)imidazole + S-adenosyl-L-methionine = 4-amino-2-methyl-5-(phosphooxymethyl)pyrimidine + CO + 5'-deoxyadenosine + formate + L-methionine + 3 H(+). It participates in cofactor biosynthesis; thiamine diphosphate biosynthesis. Catalyzes the synthesis of the hydroxymethylpyrimidine phosphate (HMP-P) moiety of thiamine from aminoimidazole ribotide (AIR) in a radical S-adenosyl-L-methionine (SAM)-dependent reaction. In Escherichia coli O45:K1 (strain S88 / ExPEC), this protein is Phosphomethylpyrimidine synthase.